The following is a 70-amino-acid chain: Cytochrome c oxidase subunit 8B, mitochondrial (70 aa).

The transit peptide at 1–24 (MPRLPPILRLLQAPAKFTVVPKAH) directs the protein to the mitochondrion. At 25–38 (VSAKPAKTPTSAVE) the chain is on the mitochondrial matrix side. Residues 39–60 (QAVGISAIVVGFMVPAGWVLAH) form a helical membrane-spanning segment. The Mitochondrial intermembrane portion of the chain corresponds to 61–70 (LESYKKSSAA).

The protein belongs to the cytochrome c oxidase VIII family. In terms of assembly, component of the cytochrome c oxidase (complex IV, CIV), a multisubunit enzyme composed of 14 subunits. The complex is composed of a catalytic core of 3 subunits MT-CO1, MT-CO2 and MT-CO3, encoded in the mitochondrial DNA, and 11 supernumerary subunits COX4I, COX5A, COX5B, COX6A, COX6B, COX6C, COX7A, COX7B, COX7C, COX8 and NDUFA4, which are encoded in the nuclear genome. The complex exists as a monomer or a dimer and forms supercomplexes (SCs) in the inner mitochondrial membrane with NADH-ubiquinone oxidoreductase (complex I, CI) and ubiquinol-cytochrome c oxidoreductase (cytochrome b-c1 complex, complex III, CIII), resulting in different assemblies (supercomplex SCI(1)III(2)IV(1) and megacomplex MCI(2)III(2)IV(2)).

It localises to the mitochondrion inner membrane. It participates in energy metabolism; oxidative phosphorylation. Functionally, component of the cytochrome c oxidase, the last enzyme in the mitochondrial electron transport chain which drives oxidative phosphorylation. The respiratory chain contains 3 multisubunit complexes succinate dehydrogenase (complex II, CII), ubiquinol-cytochrome c oxidoreductase (cytochrome b-c1 complex, complex III, CIII) and cytochrome c oxidase (complex IV, CIV), that cooperate to transfer electrons derived from NADH and succinate to molecular oxygen, creating an electrochemical gradient over the inner membrane that drives transmembrane transport and the ATP synthase. Cytochrome c oxidase is the component of the respiratory chain that catalyzes the reduction of oxygen to water. Electrons originating from reduced cytochrome c in the intermembrane space (IMS) are transferred via the dinuclear copper A center (CU(A)) of subunit 2 and heme A of subunit 1 to the active site in subunit 1, a binuclear center (BNC) formed by heme A3 and copper B (CU(B)). The BNC reduces molecular oxygen to 2 water molecules using 4 electrons from cytochrome c in the IMS and 4 protons from the mitochondrial matrix. The polypeptide is Cytochrome c oxidase subunit 8B, mitochondrial (Cox8b) (Mus musculus (Mouse)).